Reading from the N-terminus, the 83-residue chain is Small ribosomal subunit protein uS17 (83 aa).

It belongs to the universal ribosomal protein uS17 family. In terms of assembly, part of the 30S ribosomal subunit.

Functionally, one of the primary rRNA binding proteins, it binds specifically to the 5'-end of 16S ribosomal RNA. The polypeptide is Small ribosomal subunit protein uS17 (Synechococcus sp. (strain RCC307)).